Consider the following 516-residue polypeptide: MNLISKKNELKQGFYPLFFLEEFYIRVLIHMNHDHILKIGNIKQSKLIHVNRICHYLLIKRLIRQIRKQSHKYNGISEFPNYETEFYFQYKNRFYNLMIENVFLLILQTIWQHQKTRKNDPCILIHQSIQSAFPFLEKKIIHCIWIIHGNIQLFHTNQQFNFLFLLLYERIRDKSFLNLLKNIFNLKKELLIEGFYCDKFHLIELSMFLRNFYINEFDSFIVYHIVKTWKLAYLLNPSQAIDDFSFIQKNDILLNIKRKQKRLPLLCWLANKSFYSLYGNIHYVRRDLSFLMAIQAGKHISRFWKYNCIKFLQLKLGFPCSLDVLYLKSVFNQDFLFLGYRIVNKLWKKNFKIRAVSWYSPIIFFFKGRRISTKMPVFNLIHRLSVMHLCNLEGYPIHKAAWSVFNDKQIMNIFSNLLRNILLYYSGCSNRSDLGKIQYILEFSCMKTLAFKHKSSIRSTWTQYKKHVSFLSLVKNRHKNGKTSVDLYFLFQKTNKLWLLDLSKIQDSLACFLFID.

The protein belongs to the intron maturase 2 family. MatK subfamily.

The protein resides in the plastid. It is found in the chloroplast. Functionally, usually encoded in the trnK tRNA gene intron. Probably assists in splicing its own and other chloroplast group II introns. This chain is Maturase K, found in Chara connivens (Convergent stonewort).